Reading from the N-terminus, the 155-residue chain is 2-C-methyl-D-erythritol 2,4-cyclodiphosphate synthase (155 aa).

D8 and H10 together coordinate a divalent metal cation. 4-CDP-2-C-methyl-D-erythritol 2-phosphate-binding positions include 8 to 10 (DVH) and 34 to 35 (HS). H42 contributes to the a divalent metal cation binding site. Residues 56–58 (DIG), 61–65 (FPDKD), 132–135 (TTTE), and R142 contribute to the 4-CDP-2-C-methyl-D-erythritol 2-phosphate site.

Belongs to the IspF family. As to quaternary structure, homotrimer. The cofactor is a divalent metal cation.

The catalysed reaction is 4-CDP-2-C-methyl-D-erythritol 2-phosphate = 2-C-methyl-D-erythritol 2,4-cyclic diphosphate + CMP. It participates in isoprenoid biosynthesis; isopentenyl diphosphate biosynthesis via DXP pathway; isopentenyl diphosphate from 1-deoxy-D-xylulose 5-phosphate: step 4/6. Involved in the biosynthesis of isopentenyl diphosphate (IPP) and dimethylallyl diphosphate (DMAPP), two major building blocks of isoprenoid compounds. Catalyzes the conversion of 4-diphosphocytidyl-2-C-methyl-D-erythritol 2-phosphate (CDP-ME2P) to 2-C-methyl-D-erythritol 2,4-cyclodiphosphate (ME-CPP) with a corresponding release of cytidine 5-monophosphate (CMP). The protein is 2-C-methyl-D-erythritol 2,4-cyclodiphosphate synthase of Desulfatibacillum aliphaticivorans.